The sequence spans 269 residues: Regulatory protein RecX (269 aa).

It belongs to the RecX family.

It is found in the cytoplasm. In terms of biological role, modulates RecA activity. The sequence is that of Regulatory protein RecX from Listeria monocytogenes serotype 4b (strain CLIP80459).